Consider the following 256-residue polypeptide: Pimeloyl-[acyl-carrier protein] methyl ester esterase (256 aa).

In terms of domain architecture, AB hydrolase-1 spans 15-242 (HLVLLHGWGL…AAHAPFISHP (228 aa)). Substrate-binding positions include Trp22, 82 to 83 (SL), and 143 to 147 (FLALQ). Ser82 (nucleophile) is an active-site residue. Residues Asp207 and His235 contribute to the active site. His235 contacts substrate.

The protein belongs to the AB hydrolase superfamily. Carboxylesterase BioH family. As to quaternary structure, monomer.

It localises to the cytoplasm. It carries out the reaction 6-carboxyhexanoyl-[ACP] methyl ester + H2O = 6-carboxyhexanoyl-[ACP] + methanol + H(+). It functions in the pathway cofactor biosynthesis; biotin biosynthesis. Its function is as follows. The physiological role of BioH is to remove the methyl group introduced by BioC when the pimeloyl moiety is complete. It allows to synthesize pimeloyl-ACP via the fatty acid synthetic pathway through the hydrolysis of the ester bonds of pimeloyl-ACP esters. In Escherichia coli (strain K12 / MC4100 / BW2952), this protein is Pimeloyl-[acyl-carrier protein] methyl ester esterase.